The chain runs to 304 residues: Histone H1.8 (304 aa).

A compositionally biased stretch (low complexity) spans 1–24; sequence MAPGSVSSVSSSSFPSRDTSPSGS. Disordered stretches follow at residues 1–38, 110–248, and 270–304; these read MAPGSVSSVSSSSFPSRDTSPSGSCGLPGADKPGPSCR, SKAK…NSVA, and TVQETKVPTPSQDIGHKVQPIPRVRKAKTPENTQA. Residues 45–123 form the H15 domain; that stretch reads RNPTMLHMVL…GATGSFKLVP (79 aa). A compositionally biased stretch (low complexity) spans 132-144; it reads APKAGRGAAGAKE. Basic and acidic residues-rich tracts occupy residues 153–166, 189–202, and 225–237; these read LKKDQVGKATMEKG, KPKEVRKAPLKQDK, and ANAHGKTKGEKSK. Positions 154–170 match the Nuclear localization signal motif; that stretch reads KKDQVGKATMEKGQKRR. A compositionally biased stretch (polar residues) spans 270 to 281; sequence TVQETKVPTPSQ.

Belongs to the histone H1/H5 family. In terms of tissue distribution, oocyte-specific.

Its subcellular location is the cytoplasm. It is found in the nucleus. The protein localises to the chromosome. Its function is as follows. May play a key role in the control of gene expression during oogenesis and early embryogenesis, presumably through the perturbation of chromatin structure. Essential for meiotic maturation of germinal vesicle-stage oocytes. The somatic type linker histone H1c is rapidly replaced by H1oo in a donor nucleus transplanted into an oocyte. The greater mobility of H1oo as compared to H1c may contribute to this rapid replacement and increased instability of the embryonic chromatin structure. The rapid replacement of H1c with H1oo may play an important role in nuclear remodeling. This is Histone H1.8 from Mus musculus (Mouse).